The following is a 311-amino-acid chain: Probable manganese-dependent inorganic pyrophosphatase (311 aa).

His-9, Asp-13, Asp-15, Asp-77, His-99, and Asp-151 together coordinate Mn(2+).

This sequence belongs to the PPase class C family. The cofactor is Mn(2+).

The protein resides in the cytoplasm. The catalysed reaction is diphosphate + H2O = 2 phosphate + H(+). This is Probable manganese-dependent inorganic pyrophosphatase from Streptococcus agalactiae serotype III (strain NEM316).